Reading from the N-terminus, the 202-residue chain is Large ribosomal subunit protein bL9 (202 aa).

The interval 168 to 202 (DEAGFTEDYDPNAEPGEIPTELQDEAPAAEATDEA) is disordered. Over residues 192 to 202 (EAPAAEATDEA) the composition is skewed to low complexity.

Belongs to the bacterial ribosomal protein bL9 family.

Functionally, binds to the 23S rRNA. The polypeptide is Large ribosomal subunit protein bL9 (Rhizorhabdus wittichii (strain DSM 6014 / CCUG 31198 / JCM 15750 / NBRC 105917 / EY 4224 / RW1) (Sphingomonas wittichii)).